Reading from the N-terminus, the 154-residue chain is Ribosome maturation factor RimP (154 aa).

It belongs to the RimP family.

It localises to the cytoplasm. In terms of biological role, required for maturation of 30S ribosomal subunits. In Prochlorococcus marinus (strain MIT 9313), this protein is Ribosome maturation factor RimP.